A 304-amino-acid polypeptide reads, in one-letter code: Aspartate carbamoyltransferase catalytic subunit (304 aa).

Residues R49 and T50 each coordinate carbamoyl phosphate. Residue K77 coordinates L-aspartate. R99, H127, and Q130 together coordinate carbamoyl phosphate. Residues R160 and R211 each coordinate L-aspartate. Carbamoyl phosphate contacts are provided by A250 and P251. S303 carries the post-translational modification Phosphoserine.

The protein belongs to the aspartate/ornithine carbamoyltransferase superfamily. ATCase family. Heterododecamer (2C3:3R2) of six catalytic PyrB chains organized as two trimers (C3), and six regulatory PyrI chains organized as three dimers (R2).

The catalysed reaction is carbamoyl phosphate + L-aspartate = N-carbamoyl-L-aspartate + phosphate + H(+). The protein operates within pyrimidine metabolism; UMP biosynthesis via de novo pathway; (S)-dihydroorotate from bicarbonate: step 2/3. In terms of biological role, catalyzes the condensation of carbamoyl phosphate and aspartate to form carbamoyl aspartate and inorganic phosphate, the committed step in the de novo pyrimidine nucleotide biosynthesis pathway. The protein is Aspartate carbamoyltransferase catalytic subunit of Bacillus subtilis (strain 168).